Consider the following 492-residue polypeptide: Dynein regulatory complex subunit 2 (492 aa).

3 coiled-coil regions span residues 16 to 95, 256 to 318, and 373 to 401; these read LTEE…FERV, VQSA…AAQA, and LSEEEQKQEKAKAMESSNEKLTQLMHDYS.

This sequence belongs to the DRC2 family. As to quaternary structure, component of the nexin-dynein regulatory complex (N-DRC).

The protein localises to the cytoplasm. It is found in the cytoskeleton. The protein resides in the flagellum basal body. Its subcellular location is the cell projection. It localises to the cilium. The protein localises to the flagellum. It is found in the flagellum axoneme. Component of the nexin-dynein regulatory complex (N-DRC), a key regulator of ciliary/flagellar motility which maintains the alignment and integrity of the distal axoneme and regulates microtubule sliding in motile axonemes. Plays a critical role in the assembly of N-DRC and also stabilizes the assembly of multiple inner dynein arms and radial spokes. Coassembles with DRC1 to form a central scaffold needed for assembly of the N-DRC and its attachment to the outer doublet microtubules. The polypeptide is Dynein regulatory complex subunit 2 (ccdc65) (Danio rerio (Zebrafish)).